The sequence spans 440 residues: Xylose isomerase (440 aa).

Residues H100 and D103 contribute to the active site. 7 residues coordinate Mg(2+): E231, E267, H270, D295, D306, D308, and D338.

The protein belongs to the xylose isomerase family. In terms of assembly, homotetramer. Mg(2+) serves as cofactor.

It is found in the cytoplasm. The enzyme catalyses alpha-D-xylose = alpha-D-xylulofuranose. This Burkholderia cenocepacia (strain HI2424) protein is Xylose isomerase.